The following is a 187-amino-acid chain: Peptidyl-tRNA hydrolase (187 aa).

Tyr18 contacts tRNA. Catalysis depends on His23, which acts as the Proton acceptor. Positions 65, 67, and 113 each coordinate tRNA.

The protein belongs to the PTH family. Monomer.

It localises to the cytoplasm. It catalyses the reaction an N-acyl-L-alpha-aminoacyl-tRNA + H2O = an N-acyl-L-amino acid + a tRNA + H(+). Functionally, hydrolyzes ribosome-free peptidyl-tRNAs (with 1 or more amino acids incorporated), which drop off the ribosome during protein synthesis, or as a result of ribosome stalling. Its function is as follows. Catalyzes the release of premature peptidyl moieties from peptidyl-tRNA molecules trapped in stalled 50S ribosomal subunits, and thus maintains levels of free tRNAs and 50S ribosomes. This is Peptidyl-tRNA hydrolase from Coxiella burnetii (strain RSA 331 / Henzerling II).